Here is a 930-residue protein sequence, read N- to C-terminus: Translation initiation factor IF-2 (930 aa).

Positions 29 to 316 (GEFVKSASST…GRKSKRAKRA (288 aa)) are disordered. Positions 81–120 (RPGPKPGPPVAQQPAAPAAPPAAPPAPPTPAAAPPSPAPA) are enriched in pro residues. Positions 121–135 (APAAATPAEPAAPSA) are enriched in low complexity. Pro residues-rich tracts occupy residues 136-155 (RPGP…PGAP) and 180-191 (PRPQGPGGPRPG). Residues 192 to 204 (PGAGGPRPGGGPR) are compositionally biased toward gly residues. The segment covering 228 to 240 (GGGPRPGGGPRPT) has biased composition (pro residues). Positions 241-301 (PGGAGRPGGG…GAAGAFGRPG (61 aa)) are enriched in gly residues. Residues 305–314 (KRGRKSKRAK) are compositionally biased toward basic residues. One can recognise a tr-type G domain in the interval 426–598 (IRPPVVTVMG…VILTADASLD (173 aa)). The G1 stretch occupies residues 435–442 (GHVDHGKT). 435–442 (GHVDHGKT) is a GTP binding site. The tract at residues 460–464 (GITQH) is G2. The interval 485–488 (DTPG) is G3. Residues 485-489 (DTPGH) and 539-542 (NKID) contribute to the GTP site. The tract at residues 539-542 (NKID) is G4. Positions 575 to 577 (SAK) are G5.

Belongs to the TRAFAC class translation factor GTPase superfamily. Classic translation factor GTPase family. IF-2 subfamily.

Its subcellular location is the cytoplasm. In terms of biological role, one of the essential components for the initiation of protein synthesis. Protects formylmethionyl-tRNA from spontaneous hydrolysis and promotes its binding to the 30S ribosomal subunits. Also involved in the hydrolysis of GTP during the formation of the 70S ribosomal complex. The polypeptide is Translation initiation factor IF-2 (Mycolicibacterium vanbaalenii (strain DSM 7251 / JCM 13017 / BCRC 16820 / KCTC 9966 / NRRL B-24157 / PYR-1) (Mycobacterium vanbaalenii)).